The following is a 117-amino-acid chain: Ribosome-binding factor A (117 aa).

It belongs to the RbfA family. As to quaternary structure, monomer. Binds 30S ribosomal subunits, but not 50S ribosomal subunits or 70S ribosomes.

The protein localises to the cytoplasm. In terms of biological role, one of several proteins that assist in the late maturation steps of the functional core of the 30S ribosomal subunit. Associates with free 30S ribosomal subunits (but not with 30S subunits that are part of 70S ribosomes or polysomes). Required for efficient processing of 16S rRNA. May interact with the 5'-terminal helix region of 16S rRNA. The chain is Ribosome-binding factor A from Anaplasma marginale (strain St. Maries).